We begin with the raw amino-acid sequence, 131 residues long: MLNEFKQFIAKGNVMDMAVGIIIGAAFTAIVTSLVEDLINPIISLFTGGLDFSGLGLALTEGEEAAVFAYGNFIMAVINFLIIAWVVFLLVKMVNRIKEMAENEPEEAPAEDPGPTEKELLMQIRDSLAKS.

The next 2 helical transmembrane spans lie at valine 14–leucine 34 and glycine 71–valine 91.

It belongs to the MscL family. As to quaternary structure, homopentamer.

It is found in the cell inner membrane. Its function is as follows. Channel that opens in response to stretch forces in the membrane lipid bilayer. May participate in the regulation of osmotic pressure changes within the cell. The polypeptide is Large-conductance mechanosensitive channel (Dinoroseobacter shibae (strain DSM 16493 / NCIMB 14021 / DFL 12)).